Here is a 365-residue protein sequence, read N- to C-terminus: Class I histocompatibility antigen, Gogo-A*0201 alpha chain (365 aa).

The first 24 residues, 1–24 (MAVMAPRTLLLLLLGALALTQTWA), serve as a signal peptide directing secretion. Residues 25–114 (GSHSMRYFST…LRGYYNQSEA (90 aa)) form an alpha-1 region. The Extracellular portion of the chain corresponds to 25–308 (GSHSMRYFST…EPSSQPTIPI (284 aa)). N-linked (GlcNAc...) asparagine glycosylation is present at asparagine 110. Residues 115 to 206 (GSHTIQKMYG…ENGKETLQRT (92 aa)) form an alpha-2 region. Cystine bridges form between cysteine 125–cysteine 188 and cysteine 227–cysteine 283. An alpha-3 region spans residues 207–298 (DAPKTHMTHH…SLPKPLTLRW (92 aa)). An Ig-like C1-type domain is found at 209-295 (PKTHMTHHAV…QHESLPKPLT (87 aa)). A connecting peptide region spans residues 299–308 (EPSSQPTIPI). Residues 309–332 (VGIIAGLVLFGAVIAGAVIAAVRW) form a helical membrane-spanning segment. Over 333-365 (RRKSSDRKGGSYSQAASSDSAQGSDVSLTACKV) the chain is Cytoplasmic. The segment at 338–365 (DRKGGSYSQAASSDSAQGSDVSLTACKV) is disordered. The segment covering 342–359 (GSYSQAASSDSAQGSDVS) has biased composition (low complexity). Serine 343 carries the post-translational modification Phosphoserine. Phosphotyrosine is present on tyrosine 344. 6 positions are modified to phosphoserine: serine 345, serine 349, serine 350, serine 352, serine 356, and serine 359.

The protein belongs to the MHC class I family. Heterodimer of an alpha chain and a beta chain (beta-2-microglobulin).

The protein localises to the membrane. Functionally, involved in the presentation of foreign antigens to the immune system. This Gorilla gorilla gorilla (Western lowland gorilla) protein is Class I histocompatibility antigen, Gogo-A*0201 alpha chain.